The following is a 359-amino-acid chain: Carbamoyl phosphate synthase arginine-specific small chain (359 aa).

The tract at residues 1–168 (MKAYLVLATG…VETFEGNGPH (168 aa)) is CPSase. Positions 45, 216, and 218 each coordinate L-glutamine. Residues 168–355 (HIVLIDYGFK…IDDVAAKGRE (188 aa)) enclose the Glutamine amidotransferase type-1 domain. Catalysis depends on Cys243, which acts as the Nucleophile. The L-glutamine site is built by Leu244, Gln247, Asn285, and Tyr288. Residues His328 and Glu330 contribute to the active site.

The protein belongs to the CarA family. As to quaternary structure, composed of two chains; the small (or glutamine) chain promotes the hydrolysis of glutamine to ammonia, which is used by the large (or ammonia) chain to synthesize carbamoyl phosphate. Tetramer of heterodimers (alpha,beta)4.

It carries out the reaction hydrogencarbonate + L-glutamine + 2 ATP + H2O = carbamoyl phosphate + L-glutamate + 2 ADP + phosphate + 2 H(+). The catalysed reaction is L-glutamine + H2O = L-glutamate + NH4(+). It functions in the pathway amino-acid biosynthesis; L-arginine biosynthesis; carbamoyl phosphate from bicarbonate: step 1/1. Small subunit of the glutamine-dependent carbamoyl phosphate synthetase (CPSase). CPSase catalyzes the formation of carbamoyl phosphate from the ammonia moiety of glutamine, carbonate, and phosphate donated by ATP, constituting the first step of the biosynthetic pathway leading to arginine and/or urea. The small subunit (glutamine amidotransferase) binds and cleaves glutamine to supply the large subunit with the substrate ammonia. This chain is Carbamoyl phosphate synthase arginine-specific small chain, found in Halalkalibacterium halodurans (strain ATCC BAA-125 / DSM 18197 / FERM 7344 / JCM 9153 / C-125) (Bacillus halodurans).